The following is a 343-amino-acid chain: tRNA-specific 2-thiouridylase MnmA (343 aa).

ATP contacts are provided by residues Ala7–Ser14 and Met33. Cys87 (nucleophile) is an active-site residue. The cysteines at positions 87 and 184 are disulfide-linked. Gly111 contacts ATP. Residues Lys135–Gln137 form an interaction with tRNA region. The active-site Cysteine persulfide intermediate is the Cys184. An interaction with tRNA region spans residues Arg289–Tyr290.

The protein belongs to the MnmA/TRMU family.

It localises to the cytoplasm. It carries out the reaction S-sulfanyl-L-cysteinyl-[protein] + uridine(34) in tRNA + AH2 + ATP = 2-thiouridine(34) in tRNA + L-cysteinyl-[protein] + A + AMP + diphosphate + H(+). Its function is as follows. Catalyzes the 2-thiolation of uridine at the wobble position (U34) of tRNA, leading to the formation of s(2)U34. This chain is tRNA-specific 2-thiouridylase MnmA, found in Desulforudis audaxviator (strain MP104C).